Reading from the N-terminus, the 249-residue chain is Uridylate kinase (249 aa).

Residue 15-18 (KLSG) participates in ATP binding. The tract at residues 23–28 (GEEGFG) is involved in allosteric activation by GTP. Gly57 serves as a coordination point for UMP. The ATP site is built by Gly58 and Arg62. Residues Asp77 and 138–145 (TGNPFFTT) each bind UMP. ATP-binding residues include Thr165, Phe171, and Asp174.

It belongs to the UMP kinase family. In terms of assembly, homohexamer.

It localises to the cytoplasm. It carries out the reaction UMP + ATP = UDP + ADP. Its pathway is pyrimidine metabolism; CTP biosynthesis via de novo pathway; UDP from UMP (UMPK route): step 1/1. With respect to regulation, allosterically activated by GTP. Inhibited by UTP. Functionally, catalyzes the reversible phosphorylation of UMP to UDP. This is Uridylate kinase from Psychromonas ingrahamii (strain DSM 17664 / CCUG 51855 / 37).